The sequence spans 132 residues: Transcription antitermination protein NusB (132 aa).

It belongs to the NusB family.

In terms of biological role, involved in transcription antitermination. Required for transcription of ribosomal RNA (rRNA) genes. Binds specifically to the boxA antiterminator sequence of the ribosomal RNA (rrn) operons. In Campylobacter jejuni subsp. doylei (strain ATCC BAA-1458 / RM4099 / 269.97), this protein is Transcription antitermination protein NusB.